Here is a 407-residue protein sequence, read N- to C-terminus: Imidazolonepropionase (407 aa).

His72 and His74 together coordinate Fe(3+). 2 residues coordinate Zn(2+): His72 and His74. The 4-imidazolone-5-propanoate site is built by Arg81, Tyr144, and His177. Tyr144 is an N-formimidoyl-L-glutamate binding site. Residue His242 coordinates Fe(3+). His242 lines the Zn(2+) pocket. Gln245 is a binding site for 4-imidazolone-5-propanoate. Asp317 is a Fe(3+) binding site. Asp317 lines the Zn(2+) pocket. The N-formimidoyl-L-glutamate site is built by Asn319 and Gly321. Position 322 (Thr322) interacts with 4-imidazolone-5-propanoate.

This sequence belongs to the metallo-dependent hydrolases superfamily. HutI family. Zn(2+) serves as cofactor. The cofactor is Fe(3+).

Its subcellular location is the cytoplasm. It carries out the reaction 4-imidazolone-5-propanoate + H2O = N-formimidoyl-L-glutamate. The protein operates within amino-acid degradation; L-histidine degradation into L-glutamate; N-formimidoyl-L-glutamate from L-histidine: step 3/3. Catalyzes the hydrolytic cleavage of the carbon-nitrogen bond in imidazolone-5-propanoate to yield N-formimidoyl-L-glutamate. It is the third step in the universal histidine degradation pathway. The polypeptide is Imidazolonepropionase (Aliivibrio salmonicida (strain LFI1238) (Vibrio salmonicida (strain LFI1238))).